A 395-amino-acid chain; its full sequence is Elongation factor Tu (395 aa).

Positions 6–205 (KPHINVGTIG…NALEKISLPT (200 aa)) constitute a tr-type G domain. The G1 stretch occupies residues 15 to 22 (GHVDHGKT). 15 to 22 (GHVDHGKT) lines the GTP pocket. Threonine 22 contacts Mg(2+). A G2 region spans residues 59 to 63 (GITIS). A G3 region spans residues 80–83 (DCPG). Residues 80–84 (DCPGH) and 135–138 (NKCD) contribute to the GTP site. The segment at 135–138 (NKCD) is G4. Residues 173 to 175 (SAV) are G5.

It belongs to the TRAFAC class translation factor GTPase superfamily. Classic translation factor GTPase family. EF-Tu/EF-1A subfamily. In terms of assembly, monomer.

The protein localises to the cytoplasm. The enzyme catalyses GTP + H2O = GDP + phosphate + H(+). Its function is as follows. GTP hydrolase that promotes the GTP-dependent binding of aminoacyl-tRNA to the A-site of ribosomes during protein biosynthesis. This is Elongation factor Tu from Ehrlichia chaffeensis (strain ATCC CRL-10679 / Arkansas).